Consider the following 187-residue polypeptide: Ribosome-recycling factor (187 aa).

This sequence belongs to the RRF family.

The protein resides in the cytoplasm. In terms of biological role, responsible for the release of ribosomes from messenger RNA at the termination of protein biosynthesis. May increase the efficiency of translation by recycling ribosomes from one round of translation to another. The polypeptide is Ribosome-recycling factor (Lactiplantibacillus plantarum (strain ATCC BAA-793 / NCIMB 8826 / WCFS1) (Lactobacillus plantarum)).